Here is a 481-residue protein sequence, read N- to C-terminus: UDP-glycosyltransferase 88F4 (481 aa).

Residues Ser288, 357–358, 375–383, and 397–400 each bind UDP-alpha-D-glucose; these read WA, HCGWNSVLE, and YAEQ.

Belongs to the UDP-glycosyltransferase family.

Glycosyltransferase that may possess chalcone and dihydrochalcone 2'-O-glucosyltransferase activity. This is UDP-glycosyltransferase 88F4 from Malus domestica (Apple).